A 274-amino-acid polypeptide reads, in one-letter code: Rhamnulose-1-phosphate aldolase (274 aa).

Glu-117 is a catalytic residue. Zn(2+) contacts are provided by His-141, His-143, and His-212.

The protein belongs to the aldolase class II family. RhaD subfamily. As to quaternary structure, homotetramer. Requires Zn(2+) as cofactor.

The protein localises to the cytoplasm. The catalysed reaction is L-rhamnulose 1-phosphate = (S)-lactaldehyde + dihydroxyacetone phosphate. It participates in carbohydrate degradation; L-rhamnose degradation; glycerone phosphate from L-rhamnose: step 3/3. Catalyzes the reversible cleavage of L-rhamnulose-1-phosphate to dihydroxyacetone phosphate (DHAP) and L-lactaldehyde. The polypeptide is Rhamnulose-1-phosphate aldolase (Shigella boydii serotype 4 (strain Sb227)).